Consider the following 330-residue polypeptide: Methionyl-tRNA formyltransferase (330 aa).

S112–P115 serves as a coordination point for (6S)-5,6,7,8-tetrahydrofolate.

This sequence belongs to the Fmt family.

It catalyses the reaction L-methionyl-tRNA(fMet) + (6R)-10-formyltetrahydrofolate = N-formyl-L-methionyl-tRNA(fMet) + (6S)-5,6,7,8-tetrahydrofolate + H(+). In terms of biological role, attaches a formyl group to the free amino group of methionyl-tRNA(fMet). The formyl group appears to play a dual role in the initiator identity of N-formylmethionyl-tRNA by promoting its recognition by IF2 and preventing the misappropriation of this tRNA by the elongation apparatus. The sequence is that of Methionyl-tRNA formyltransferase from Synechocystis sp. (strain ATCC 27184 / PCC 6803 / Kazusa).